Consider the following 65-residue polypeptide: MSLVWLEAMLPLGIIGGMLCIMGNSQYYIHKAYHGRPKHIGHDEWDVAMERRDKKVVEKAAAPSS.

The chain crosses the membrane as a helical span at residues 3 to 23 (LVWLEAMLPLGIIGGMLCIMG).

This sequence belongs to the complex I NDUFA1 subunit family. In terms of assembly, complex I is composed of at least 49 different subunits.

The protein localises to the mitochondrion inner membrane. Accessory subunit of the mitochondrial membrane respiratory chain NADH dehydrogenase (Complex I), that is believed not to be involved in catalysis. Complex I functions in the transfer of electrons from NADH to the respiratory chain. The immediate electron acceptor for the enzyme is believed to be ubiquinone. This is NADH dehydrogenase [ubiquinone] 1 alpha subcomplex subunit 1 from Arabidopsis thaliana (Mouse-ear cress).